A 99-amino-acid chain; its full sequence is UPF0235 protein Cag_0319 (99 aa).

Belongs to the UPF0235 family.

The sequence is that of UPF0235 protein Cag_0319 from Chlorobium chlorochromatii (strain CaD3).